We begin with the raw amino-acid sequence, 153 residues long: MATLEDKLQELLQPSVEDLGCELWGIECQRSGRFFTVRLYIDKKDGGVTVDDCADVSRQVSAVLDVEDPIADKYNLEVSSPGLNRPLFTLKQFENYIGQDISVHLRVPMFDRRKWQGKLEKIENDMLTLIVDNQPQVLVFGNIQKANVVPKFN.

This sequence belongs to the RimP family.

It is found in the cytoplasm. Its function is as follows. Required for maturation of 30S ribosomal subunits. The chain is Ribosome maturation factor RimP from Histophilus somni (strain 2336) (Haemophilus somnus).